The sequence spans 267 residues: uncharacterized protein (267 aa).

The tract at residues 72–267 is disordered; that stretch reads LTENNNNNNT…EEKKKKKKKK (196 aa). Over residues 122–145 the composition is skewed to low complexity; it reads DSVSSSTTTTIITNNKKINNNNNN. Residues 159–175 show a composition bias toward basic and acidic residues; sequence ENEKSVQKSKKEKESPK. Residues 194–218 are compositionally biased toward low complexity; sequence SESSSSSSSSSSSESSSSESESSSS.

This is an uncharacterized protein from Dictyostelium discoideum (Social amoeba).